The sequence spans 266 residues: 3-methyl-2-oxobutanoate hydroxymethyltransferase 2 (266 aa).

Residues Asp45 and Asp84 each contribute to the Mg(2+) site. 3-methyl-2-oxobutanoate contacts are provided by residues 45–46 (DS), Asp84, and Lys112. Glu114 contributes to the Mg(2+) binding site. Residue Glu181 is the Proton acceptor of the active site.

This sequence belongs to the PanB family. As to quaternary structure, homodecamer; pentamer of dimers. Requires Mg(2+) as cofactor.

It localises to the cytoplasm. It catalyses the reaction 3-methyl-2-oxobutanoate + (6R)-5,10-methylene-5,6,7,8-tetrahydrofolate + H2O = 2-dehydropantoate + (6S)-5,6,7,8-tetrahydrofolate. It functions in the pathway cofactor biosynthesis; (R)-pantothenate biosynthesis; (R)-pantoate from 3-methyl-2-oxobutanoate: step 1/2. Catalyzes the reversible reaction in which hydroxymethyl group from 5,10-methylenetetrahydrofolate is transferred onto alpha-ketoisovalerate to form ketopantoate. This Pseudomonas aeruginosa (strain UCBPP-PA14) protein is 3-methyl-2-oxobutanoate hydroxymethyltransferase 2.